A 131-amino-acid chain; its full sequence is Protein NrdI (131 aa).

Belongs to the NrdI family.

Functionally, probably involved in ribonucleotide reductase function. The polypeptide is Protein NrdI (Bacillus licheniformis (strain ATCC 14580 / DSM 13 / JCM 2505 / CCUG 7422 / NBRC 12200 / NCIMB 9375 / NCTC 10341 / NRRL NRS-1264 / Gibson 46)).